Reading from the N-terminus, the 666-residue chain is Putative L-type lectin-domain containing receptor kinase V.1 (666 aa).

An N-terminal signal peptide occupies residues 1-18 (MVLLLFLVLFFVPESVVC). Residues 19–289 (QRPNPNGVEF…WIQSPNGILT (271 aa)) lie on the Extracellular side of the membrane. The legume-lectin like stretch occupies residues 27 to 257 (EFNTSGNMYT…SHYILGWTFK (231 aa)). Residues Asn-29, Asn-74, Asn-123, Asn-176, Asn-204, and Asn-259 are each glycosylated (N-linked (GlcNAc...) asparagine). The helical transmembrane segment at 290–310 (ISLTVSGVIILIILSLSLWLF) threads the bilayer. At 311–666 (LKRKKLLEVL…FTESFVSHGR (356 aa)) the chain is on the cytoplasmic side. Positions 344–625 (FKDTEVLGKG…SVAQLPHNLL (282 aa)) constitute a Protein kinase domain. ATP-binding positions include 350-358 (LGKGGFGKV) and Lys-373. Asp-469 (proton acceptor) is an active-site residue.

It in the C-terminal section; belongs to the protein kinase superfamily. Ser/Thr protein kinase family. This sequence in the N-terminal section; belongs to the leguminous lectin family.

It localises to the cell membrane. It carries out the reaction L-seryl-[protein] + ATP = O-phospho-L-seryl-[protein] + ADP + H(+). The enzyme catalyses L-threonyl-[protein] + ATP = O-phospho-L-threonyl-[protein] + ADP + H(+). This chain is Putative L-type lectin-domain containing receptor kinase V.1 (LECRK51), found in Arabidopsis thaliana (Mouse-ear cress).